The sequence spans 409 residues: Sperm equatorial segment protein 1 (409 aa).

An N-terminal signal peptide occupies residues 1–18; the sequence is MKPVVLVALLWLWPSSFL. N-linked (GlcNAc...) asparagine glycosylation occurs at Asn-132. The disordered stretch occupies residues 141–223; sequence EPYIEKEPEP…TTNTQGTPNT (83 aa). Over residues 167 to 177 the composition is skewed to acidic residues; sequence PEPEPESESAP. The span at 198–208 shows a compositional bias: polar residues; that stretch reads NKVRTGTSRMS. A compositionally biased stretch (low complexity) spans 209 to 223; it reads TVITQTTNTQGTPNT.

It belongs to the SPESP1 family. Glycosylated. In testis there are two predominant forms of 77- and 67-kDa and a form of 47-kDa, whereas in epididymal sperm from caput, corpus, and cauda there are two forms of 47- and 43-kDa. Testis forms contain complex carbohydrate residues. Epididymal sperm forms are N-glycosylated. Then undergoes significant glycosylation in the testis and that the majority of these glycoconjugates are removed by the time sperm reach the caput epididymis.

It is found in the cytoplasmic vesicle. Its subcellular location is the secretory vesicle. It localises to the acrosome. Functionally, involved in fertilization ability of sperm. This is Sperm equatorial segment protein 1 from Rattus norvegicus (Rat).